A 457-amino-acid polypeptide reads, in one-letter code: NADP-specific glutamate dehydrogenase (457 aa).

Residue lysine 113 is part of the active site.

It belongs to the Glu/Leu/Phe/Val dehydrogenases family. In terms of assembly, homohexamer.

It carries out the reaction L-glutamate + NADP(+) + H2O = 2-oxoglutarate + NH4(+) + NADPH + H(+). This Tuber borchii (White truffle) protein is NADP-specific glutamate dehydrogenase (GDH).